A 444-amino-acid polypeptide reads, in one-letter code: Glutamate--tRNA ligase 2 (444 aa).

A 'HIGH' region motif is present at residues 8–18 (PSPTGHLHAGN). The short motif at 241–245 (KLSKR) is the 'KMSKS' region element. Lys244 provides a ligand contact to ATP.

This sequence belongs to the class-I aminoacyl-tRNA synthetase family. Glutamate--tRNA ligase type 1 subfamily. In terms of assembly, monomer.

It is found in the cytoplasm. The catalysed reaction is tRNA(Glu) + L-glutamate + ATP = L-glutamyl-tRNA(Glu) + AMP + diphosphate. In terms of biological role, catalyzes the attachment of glutamate to tRNA(Glu) in a two-step reaction: glutamate is first activated by ATP to form Glu-AMP and then transferred to the acceptor end of tRNA(Glu). This Acidiphilium cryptum (strain JF-5) protein is Glutamate--tRNA ligase 2.